Here is a 131-residue protein sequence, read N- to C-terminus: Large ribosomal subunit protein eL32 (131 aa).

The protein belongs to the eukaryotic ribosomal protein eL32 family.

The protein is Large ribosomal subunit protein eL32 (RPL32) of Candida glabrata (strain ATCC 2001 / BCRC 20586 / JCM 3761 / NBRC 0622 / NRRL Y-65 / CBS 138) (Yeast).